The primary structure comprises 1031 residues: Receptor-like protein EIX1 (1031 aa).

A signal peptide spans 1–29 (MDKWKYARLAQFLFTLSLLFLETSFGLGG). N-linked (GlcNAc...) asparagine glycosylation is present at N30. An N-cap region spans residues 30 to 113 (NKTLCLDKER…PRLTGKLSPS (84 aa)). Over 30-971 (NKTLCLDKER…DEEEEFPSLE (942 aa)) the chain is Extracellular. Residues 117 to 140 (LEYLNYLDLSVNEFERSEIPRFIG) form an LRR 1 repeat. Residues 142 to 165 (LKRLEYLNLSASFFSGVIPIQFQN) form an LRR 2; degenerate repeat. Residues N149 and N165 are each glycosylated (N-linked (GlcNAc...) asparagine). LRR repeat units lie at residues 166–189 (LTSL…WLSH), 191–215 (SSLE…ITKV), 216–240 (PSLK…DLAN), and 243–266 (LISL…SWVF). N240 carries an N-linked (GlcNAc...) asparagine glycan. N-linked (GlcNAc...) asparagine glycosylation is present at N267. LRR repeat units follow at residues 269 to 292 (TTSL…RFGT), 293 to 317 (LMYL…SFGN), 318 to 341 (LTRL…LFLR), 346 to 369 (RKSL…ATRF), 370 to 393 (SSLK…AGQV), 394 to 416 (STLE…LALF), 417 to 440 (PSLR…IGKL), 441 to 463 (SQLR…MGQL), 465 to 487 (NLES…HLSN), 488 to 509 (LSSL…SFNW), 512 to 536 (PFQL…LQNQ), 538 to 559 (NYTV…WFSS), 561 to 584 (PPDL…LIEN), and 586 to 611 (YGYR…NVQI). N317 carries N-linked (GlcNAc...) asparagine glycosylation. Residues N365 and N383 are each glycosylated (N-linked (GlcNAc...) asparagine). An N-linked (GlcNAc...) asparagine glycan is attached at N487. N-linked (GlcNAc...) asparagine glycans are attached at residues N538, N568, and N597. The stretch at 612-629 (FYLHKNQFFGSISSICRS) is one LRR 21; degenerate repeat. LRR repeat units follow at residues 630 to 654 (RTSP…WMNM), 655 to 678 (TSLA…LGSL), 679 to 703 (TNLK…QCQG), 705 to 725 (QILD…IGTD), 726 to 750 (LLNL…ICQL), and 752 to 773 (FLQI…CFNN). N-linked (GlcNAc...) asparagine glycans are attached at residues N653 and N666. 2 N-linked (GlcNAc...) asparagine glycosylation sites follow: N773 and N781. LRR repeat units lie at residues 823 to 847 (LLYL…IADM), 848 to 871 (RGLK…IGQM), 872 to 895 (RMLE…LANL), and 896 to 918 (TFLS…STQL). 3 N-linked (GlcNAc...) asparagine glycosylation sites follow: N854, N861, and N894. The C-cap/acidic domain stretch occupies residues 919-971 (QSFDRSSYSDNAQLCGPPLQECPGYAPPSPLIDHGSNNNPQEHDEEEEFPSLE). The chain crosses the membrane as a helical span at residues 972-992 (FYISMVLSFFVAFWGILGCLI). The Cytoplasmic segment spans residues 993 to 1031 (VNSSWRNAYFKFLTDTTSWLDMISRVWFARLKKKLRRAR).

This sequence belongs to the RLP family. In terms of assembly, interacts with EIX elicitor protein.

The protein localises to the cell membrane. In terms of biological role, involved in plant defense. Confers resistance to the fungal pathogen T.viride through recognition of the EIX elicitor protein. This is Receptor-like protein EIX1 from Solanum lycopersicum (Tomato).